Reading from the N-terminus, the 204-residue chain is B9 domain-containing protein 1 (204 aa).

Positions 9–127 (FLLMITGQVE…TIPMFVPEST (119 aa)) constitute a C2 B9-type domain.

It belongs to the B9D family. In terms of assembly, part of the tectonic-like complex (also named B9 complex).

The protein localises to the cytoplasm. It localises to the cytoskeleton. It is found in the cilium basal body. Functionally, component of the tectonic-like complex, a complex localized at the transition zone of primary cilia and acting as a barrier that prevents diffusion of transmembrane proteins between the cilia and plasma membranes. Required for ciliogenesis and sonic hedgehog/SHH signaling. In Mus musculus (Mouse), this protein is B9 domain-containing protein 1 (B9d1).